A 248-amino-acid polypeptide reads, in one-letter code: Anamorsin homolog (248 aa).

Positions 4–130 are N-terminal SAM-like domain; sequence FKGLQKSLYI…ETGSSARLSF (127 aa). The interval 131–161 is linker; it reads AKKTSSVNVWKISGDDEELIDEEELLDEEDK. [2Fe-2S] cluster-binding residues include Cys172, Cys181, Cys184, and Cys186. The fe-S binding site A stretch occupies residues 172–186; sequence CSTTGKRKACKNCSC. Residues Cys209, Cys212, Cys220, and Cys223 each coordinate [4Fe-4S] cluster. 2 consecutive short sequence motifs (cx2C motif) follow at residues 209-212 and 220-223; these read CGNC and CSTC. Residues 209–223 form a fe-S binding site B region; it reads CGNCYLGDAFRCSTC.

This sequence belongs to the anamorsin family. As to quaternary structure, monomer. [2Fe-2S] cluster is required as a cofactor. The cofactor is [4Fe-4S] cluster.

Its subcellular location is the cytoplasm. The protein resides in the mitochondrion intermembrane space. Its function is as follows. Component of the cytosolic iron-sulfur (Fe-S) protein assembly (CIA) machinery. Required for the maturation of extramitochondrial Fe-S proteins. Part of an electron transfer chain functioning in an early step of cytosolic Fe-S biogenesis, facilitating the de novo assembly of a [4Fe-4S] cluster on the cytosolic Fe-S scaffold complex. Electrons are transferred from NADPH via a FAD- and FMN-containing diflavin oxidoreductase. Together with the diflavin oxidoreductase, also required for the assembly of the diferric tyrosyl radical cofactor of ribonucleotide reductase (RNR), probably by providing electrons for reduction during radical cofactor maturation in the catalytic small subunit. This chain is Anamorsin homolog, found in Drosophila virilis (Fruit fly).